Here is a 226-residue protein sequence, read N- to C-terminus: V-type proton ATPase subunit E 1 (226 aa).

An N-acetylalanine modification is found at Ala2. Tyr56 is modified (phosphotyrosine).

Belongs to the V-ATPase E subunit family. V-ATPase is a heteromultimeric enzyme made up of two complexes: the ATP-hydrolytic V1 complex and the proton translocation V0 complex. The V1 complex consists of three catalytic AB heterodimers that form a heterohexamer, three peripheral stalks each consisting of EG heterodimers, one central rotor including subunits D and F, and the regulatory subunits C and H. The proton translocation complex V0 consists of the proton transport subunit a, a ring of proteolipid subunits c9c'', rotary subunit d, subunits e and f, and the accessory subunits ATP6AP1/Ac45 and ATP6AP2/PRR. Interacts with RABL2/RABL2A; binds preferentially to GTP-bound RABL2. Interacts with ALDOC. Interacts with RAB11B. In terms of tissue distribution, kidney; localizes to early distal nephron, encompassing thick ascending limbs and distal convoluted tubules (at protein level). Ubiquitous. High expression in the skin.

It localises to the apical cell membrane. It is found in the cytoplasmic vesicle. The protein resides in the secretory vesicle. Its subcellular location is the synaptic vesicle membrane. The protein localises to the clathrin-coated vesicle membrane. Functionally, subunit of the V1 complex of vacuolar(H+)-ATPase (V-ATPase), a multisubunit enzyme composed of a peripheral complex (V1) that hydrolyzes ATP and a membrane integral complex (V0) that translocates protons. V-ATPase is responsible for acidifying and maintaining the pH of intracellular compartments and in some cell types, is targeted to the plasma membrane, where it is responsible for acidifying the extracellular environment. This Homo sapiens (Human) protein is V-type proton ATPase subunit E 1 (ATP6V1E1).